A 350-amino-acid chain; its full sequence is Hydroxymethylglutaryl-CoA synthase (350 aa).

Catalysis depends on E83, which acts as the Proton donor/acceptor. C115 functions as the Acyl-thioester intermediate in the catalytic mechanism. (3S)-3-hydroxy-3-methylglutaryl-CoA-binding residues include C115 and T156. R204 is a CoA binding site. Positions 206 and 239 each coordinate (3S)-3-hydroxy-3-methylglutaryl-CoA. H239 serves as the catalytic Proton donor/acceptor. Residue K244 participates in CoA binding. N271 and S301 together coordinate (3S)-3-hydroxy-3-methylglutaryl-CoA.

The protein belongs to the thiolase-like superfamily. Archaeal HMG-CoA synthase family. In terms of assembly, interacts with acetoacetyl-CoA thiolase that catalyzes the precedent step in the pathway and with a DUF35 protein. The acetoacetyl-CoA thiolase/HMG-CoA synthase complex channels the intermediate via a fused CoA-binding site, which allows for efficient coupling of the endergonic thiolase reaction with the exergonic HMGCS reaction.

The enzyme catalyses acetoacetyl-CoA + acetyl-CoA + H2O = (3S)-3-hydroxy-3-methylglutaryl-CoA + CoA + H(+). Its pathway is metabolic intermediate biosynthesis; (R)-mevalonate biosynthesis; (R)-mevalonate from acetyl-CoA: step 2/3. Catalyzes the condensation of acetyl-CoA with acetoacetyl-CoA to form 3-hydroxy-3-methylglutaryl-CoA (HMG-CoA). Functions in the mevalonate (MVA) pathway leading to isopentenyl diphosphate (IPP), a key precursor for the biosynthesis of isoprenoid compounds that are building blocks of archaeal membrane lipids. This chain is Hydroxymethylglutaryl-CoA synthase, found in Pyrococcus furiosus (strain ATCC 43587 / DSM 3638 / JCM 8422 / Vc1).